We begin with the raw amino-acid sequence, 505 residues long: Maturase K (505 aa).

This sequence belongs to the intron maturase 2 family. MatK subfamily.

It localises to the plastid. The protein localises to the chloroplast. In terms of biological role, usually encoded in the trnK tRNA gene intron. Probably assists in splicing its own and other chloroplast group II introns. The sequence is that of Maturase K from Ficus carica (Common fig).